Consider the following 266-residue polypeptide: Phosphatidylglycerol--prolipoprotein diacylglyceryl transferase (266 aa).

The next 7 helical transmembrane spans lie at 10–30, 56–76, 92–112, 120–140, 171–191, 199–219, and 233–253; these read VALA…LIGI, LVFW…VLFY, WKGG…VWWF, FFQL…AGRI, PSQL…LWLF, ASVS…VEFV, and WLTM…ALMV. Arg139 is an a 1,2-diacyl-sn-glycero-3-phospho-(1'-sn-glycerol) binding site.

This sequence belongs to the Lgt family.

The protein resides in the cell inner membrane. The catalysed reaction is L-cysteinyl-[prolipoprotein] + a 1,2-diacyl-sn-glycero-3-phospho-(1'-sn-glycerol) = an S-1,2-diacyl-sn-glyceryl-L-cysteinyl-[prolipoprotein] + sn-glycerol 1-phosphate + H(+). The protein operates within protein modification; lipoprotein biosynthesis (diacylglyceryl transfer). Catalyzes the transfer of the diacylglyceryl group from phosphatidylglycerol to the sulfhydryl group of the N-terminal cysteine of a prolipoprotein, the first step in the formation of mature lipoproteins. The polypeptide is Phosphatidylglycerol--prolipoprotein diacylglyceryl transferase (Pseudomonas paraeruginosa (strain DSM 24068 / PA7) (Pseudomonas aeruginosa (strain PA7))).